A 272-amino-acid chain; its full sequence is D-aminoacyl-tRNA deacylase (272 aa).

This sequence belongs to the DtdA deacylase family. Monomer. Zn(2+) serves as cofactor.

The catalysed reaction is a D-aminoacyl-tRNA + H2O = a tRNA + a D-alpha-amino acid + H(+). It catalyses the reaction glycyl-tRNA(Ala) + H2O = tRNA(Ala) + glycine + H(+). In terms of biological role, D-aminoacyl-tRNA deacylase with broad substrate specificity. By recycling D-aminoacyl-tRNA to D-amino acids and free tRNA molecules, this enzyme counteracts the toxicity associated with the formation of D-aminoacyl-tRNA entities in vivo. This chain is D-aminoacyl-tRNA deacylase, found in Thermococcus onnurineus (strain NA1).